A 200-amino-acid polypeptide reads, in one-letter code: Small ribosomal subunit protein uS4 (200 aa).

A disordered region spans residues 22–42; the sequence is TGKELEKRPYAPGPHGPGQRK. Positions 92–152 constitute an S4 RNA-binding domain; it reads SRLDNIVYRL…EKSQNLSVVK (61 aa).

This sequence belongs to the universal ribosomal protein uS4 family. In terms of assembly, part of the 30S ribosomal subunit. Contacts protein S5. The interaction surface between S4 and S5 is involved in control of translational fidelity.

One of the primary rRNA binding proteins, it binds directly to 16S rRNA where it nucleates assembly of the body of the 30S subunit. In terms of biological role, with S5 and S12 plays an important role in translational accuracy. This chain is Small ribosomal subunit protein uS4, found in Bacillus licheniformis (strain ATCC 14580 / DSM 13 / JCM 2505 / CCUG 7422 / NBRC 12200 / NCIMB 9375 / NCTC 10341 / NRRL NRS-1264 / Gibson 46).